The following is a 465-amino-acid chain: U4/U6 small nuclear ribonucleoprotein PRP4 (465 aa).

7 WD repeats span residues 173-212 (VSTK…PLTQ), 216-256 (SHVG…GGLR), 263-302 (GHER…ELLL), 305-344 (GHDK…KVMT), 347-386 (GHSK…EGQL), 391-432 (AHRN…KMGS), and 435-464 (GHTD…IKLW).

Component of the U4/U6-U5 tri-snRNP complex composed of the U4, U6 and U5 snRNAs and at least PRP3, PRP4, PRP6, PRP8, PRP18, PRP31, PRP38, SNU13, SNU23, SNU66, SNU114, SPP381, SMB1, SMD1, SMD2, SMD3, SMX2, SMX3, LSM2, LSM3, LSM4, LSM5, LSM6, LSM7, LSM8, BRR2 and DIB1.

The protein resides in the nucleus. Involved in RNA splicing. Is required for the association of U4/U6 snRNP with U5 snRNP in an early step of spliceosome assembly. The sequence is that of U4/U6 small nuclear ribonucleoprotein PRP4 (PRP4) from Saccharomyces cerevisiae (strain ATCC 204508 / S288c) (Baker's yeast).